The sequence spans 163 residues: NADH-quinone oxidoreductase subunit I (163 aa).

4Fe-4S ferredoxin-type domains lie at Leu-53–Gly-83 and Val-94–Asn-123. [4Fe-4S] cluster-binding residues include Cys-63, Cys-66, Cys-69, Cys-73, Cys-103, Cys-106, Cys-109, and Cys-113.

This sequence belongs to the complex I 23 kDa subunit family. NDH-1 is composed of 14 different subunits. Subunits NuoA, H, J, K, L, M, N constitute the membrane sector of the complex. It depends on [4Fe-4S] cluster as a cofactor.

It localises to the cell inner membrane. It catalyses the reaction a quinone + NADH + 5 H(+)(in) = a quinol + NAD(+) + 4 H(+)(out). In terms of biological role, NDH-1 shuttles electrons from NADH, via FMN and iron-sulfur (Fe-S) centers, to quinones in the respiratory chain. The immediate electron acceptor for the enzyme in this species is believed to be ubiquinone. Couples the redox reaction to proton translocation (for every two electrons transferred, four hydrogen ions are translocated across the cytoplasmic membrane), and thus conserves the redox energy in a proton gradient. This chain is NADH-quinone oxidoreductase subunit I, found in Rhizobium johnstonii (strain DSM 114642 / LMG 32736 / 3841) (Rhizobium leguminosarum bv. viciae).